The following is a 93-amino-acid chain: Neutrophil cationic peptide 1 type A (93 aa).

An N-terminal signal peptide occupies residues 1-19; that stretch reads MRTVPLFAACLLLTLMAQA. Positions 20-62 are excised as a propeptide; it reads EPLPRAADHSDTKMKGDREDHVAVISFWEEESTSLEDAGAGAG. 3 disulfide bridges follow: cysteine 65-cysteine 93, cysteine 67-cysteine 82, and cysteine 72-cysteine 92.

The protein belongs to the alpha-defensin family.

The protein resides in the secreted. Its function is as follows. Has antibiotic, anti-fungi and antiviral activity. This Cavia porcellus (Guinea pig) protein is Neutrophil cationic peptide 1 type A.